Here is a 399-residue protein sequence, read N- to C-terminus: Centrosomal protein 43 (399 aa).

In terms of domain architecture, LisH spans 70-102; sequence DGRLVASLVAEFLQFFNLDFTLAVFQPETSTLQ. Disordered regions lie at residues 139 to 218 and 232 to 308; these read EKGP…SSLH and NRTL…SESK. Position 143 is a phosphothreonine (Thr-143). Ser-152, Ser-156, and Ser-160 each carry phosphoserine. A compositionally biased stretch (polar residues) spans 163–172; that stretch reads GKTSAQTTPS. Thr-170 is subject to Phosphothreonine. The span at 175-186 shows a compositional bias: basic residues; the sequence is PRYKGQGKKKTS. Ser-202 is modified (phosphoserine). Residues 205–218 are compositionally biased toward low complexity; sequence SVSLSEPKSKSSLH. The residue at position 234 (Thr-234) is a Phosphothreonine. Positions 245–256 are enriched in acidic residues; it reads PDEDDMEGDSFF. Over residues 259-275 the composition is skewed to basic and acidic residues; it reads PIPKPEKTYGLRKEPRK. Over residues 286–302 the composition is skewed to low complexity; it reads APPLKSGLSSLAGAPSL. Residues Ser-301 and Ser-326 each carry the phosphoserine modification. The disordered stretch occupies residues 331 to 353; the sequence is TGEDDDYVDDFNSTSHRSEKSEI. Tyr-337 is subject to Phosphotyrosine.

Belongs to the CEP43 family. In terms of assembly, homodimer. Part of a ternary complex that contains CEP350, CEP43 and MAPRE1. Interacts directly with CEP350 and MAPRE1. Interacts with CEP19. Interacts (via N-terminus) with CEP350 (via C-terminus). As to expression, ubiquitous. Highly expressed in heart, liver, muscle, kidney, intestine, colon, adrenal gland, prostate, testis, and pancreas.

It is found in the cytoplasm. The protein localises to the cytoskeleton. It localises to the microtubule organizing center. The protein resides in the centrosome. Its subcellular location is the centriole. It is found in the cilium basal body. Functionally, required for anchoring microtubules to the centrosomes. Required for ciliation. This chain is Centrosomal protein 43, found in Homo sapiens (Human).